The chain runs to 310 residues: Ribosomal RNA large subunit methyltransferase F (310 aa).

Belongs to the methyltransferase superfamily. METTL16/RlmF family.

The protein resides in the cytoplasm. The catalysed reaction is adenosine(1618) in 23S rRNA + S-adenosyl-L-methionine = N(6)-methyladenosine(1618) in 23S rRNA + S-adenosyl-L-homocysteine + H(+). Its function is as follows. Specifically methylates the adenine in position 1618 of 23S rRNA. The protein is Ribosomal RNA large subunit methyltransferase F of Psychromonas ingrahamii (strain DSM 17664 / CCUG 51855 / 37).